The primary structure comprises 398 residues: Signal-regulatory protein beta-1 isoform 3 (398 aa).

The signal sequence occupies residues 1–29; it reads MPVPASWPHLPSPFLLMTLLLGRLTGVAG. The Extracellular portion of the chain corresponds to 30–371; sequence EEELQVIQPD…GPALASAAPL (342 aa). An Ig-like V-type domain is found at 31–136; that stretch reads EELQVIQPDK…SPDHVEFKSG (106 aa). 2 cysteine pairs are disulfide-bonded: Cys54–Cys120 and Cys169–Cys227. 2 consecutive Ig-like C1-type domains span residues 147–246 and 253–347; these read PSAP…ANLS and PTLE…HDLK. N-linked (GlcNAc...) asparagine glycosylation is found at Asn244, Asn291, and Asn318. Cys272 and Cys330 are disulfide-bonded. A compositionally biased stretch (basic and acidic residues) spans 337 to 354; sequence QPAVSKSHDLKVSAHPKE. The disordered stretch occupies residues 337 to 361; that stretch reads QPAVSKSHDLKVSAHPKEQGSNTAP. A helical transmembrane segment spans residues 372-392; the sequence is LIAFLLGPKVLLVVGVSVIYV. Residues 393-398 are Cytoplasmic-facing; it reads YWKQKA.

It localises to the membrane. Functionally, immunoglobulin-like cell surface receptor involved in the negative regulation of receptor tyrosine kinase-coupled signaling processes. This is Signal-regulatory protein beta-1 isoform 3 (SIRPB1) from Homo sapiens (Human).